The primary structure comprises 129 residues: Small ribosomal subunit protein uS11 (129 aa).

It belongs to the universal ribosomal protein uS11 family. In terms of assembly, part of the 30S ribosomal subunit. Interacts with proteins S7 and S18. Binds to IF-3.

Its function is as follows. Located on the platform of the 30S subunit, it bridges several disparate RNA helices of the 16S rRNA. Forms part of the Shine-Dalgarno cleft in the 70S ribosome. The chain is Small ribosomal subunit protein uS11 from Lacticaseibacillus casei (strain BL23) (Lactobacillus casei).